We begin with the raw amino-acid sequence, 267 residues long: Indole-3-glycerol phosphate synthase (267 aa).

This sequence belongs to the TrpC family.

It catalyses the reaction 1-(2-carboxyphenylamino)-1-deoxy-D-ribulose 5-phosphate + H(+) = (1S,2R)-1-C-(indol-3-yl)glycerol 3-phosphate + CO2 + H2O. Its pathway is amino-acid biosynthesis; L-tryptophan biosynthesis; L-tryptophan from chorismate: step 4/5. This is Indole-3-glycerol phosphate synthase from Deinococcus radiodurans (strain ATCC 13939 / DSM 20539 / JCM 16871 / CCUG 27074 / LMG 4051 / NBRC 15346 / NCIMB 9279 / VKM B-1422 / R1).